Reading from the N-terminus, the 608-residue chain is Threonine--tRNA ligase (608 aa).

The interval 1-143 (MRVLYIHAER…SFKPEEGRAD (143 aa)) is editing domain. Catalytic stretches follow at residues 194–490 (PKYL…PRLP) and 195–490 (KYLE…PRLP). 3 residues coordinate Zn(2+): Cys287, His338, and His459.

This sequence belongs to the class-II aminoacyl-tRNA synthetase family. In terms of assembly, homodimer. It depends on Zn(2+) as a cofactor.

The protein localises to the cytoplasm. It carries out the reaction tRNA(Thr) + L-threonine + ATP = L-threonyl-tRNA(Thr) + AMP + diphosphate + H(+). In terms of biological role, catalyzes the attachment of threonine to tRNA(Thr) in a two-step reaction: L-threonine is first activated by ATP to form Thr-AMP and then transferred to the acceptor end of tRNA(Thr). Also edits incorrectly charged L-seryl-tRNA(Thr). The polypeptide is Threonine--tRNA ligase (Pyrobaculum aerophilum (strain ATCC 51768 / DSM 7523 / JCM 9630 / CIP 104966 / NBRC 100827 / IM2)).